A 492-amino-acid chain; its full sequence is Cytoplasmic dynein 1 light intermediate chain 2 (492 aa).

Residue 61-68 (GEDGSGKT) coordinates ATP. 3 disordered regions span residues 187–206 (PEEGCQGSPQRRGPLTSGSD), 371–423 (AKQP…KNNA), and 437–492 (LSKK…ENEA). A Phosphoserine modification is found at serine 194. Over residues 371-381 (AKQPATPTRAS) the composition is skewed to polar residues. Residues serine 383 and serine 391 each carry the phosphoserine modification. Arginine 397 bears the Omega-N-methylarginine mark. A compositionally biased stretch (low complexity) spans 400-412 (PASVPSSSPGTSV). Phosphothreonine is present on threonine 441. A phosphoserine mark is found at serine 443 and serine 446. Residues 452–469 (VQSTAKKSGQKTVLSNVQ) show a composition bias toward polar residues. The span at 471–480 (ELDRMTRKPD) shows a compositional bias: basic and acidic residues. Over residues 482–492 (MVTNSSTENEA) the composition is skewed to polar residues.

This sequence belongs to the dynein light intermediate chain family. Homodimer. The cytoplasmic dynein 1 complex consists of two catalytic heavy chains (HCs) and a number of non-catalytic subunits presented by intermediate chains (ICs), light intermediate chains (LICs) and light chains (LCs); the composition seems to vary in respect to the IC, LIC and LC composition. The heavy chain homodimer serves as a scaffold for the probable homodimeric assembly of the respective non-catalytic subunits. The ICs and LICs bind directly to the HC dimer and the LCs assemble on the IC dimer. Interacts with DYNC1H1; DYNC1LI1 and DYNC1LI2 bind mutually exclusive to DYNC1H.

It is found in the cytoplasm. The protein localises to the cytoskeleton. Acts as one of several non-catalytic accessory components of the cytoplasmic dynein 1 complex that are thought to be involved in linking dynein to cargos and to adapter proteins that regulate dynein function. Cytoplasmic dynein 1 acts as a motor for the intracellular retrograde motility of vesicles and organelles along microtubules. May play a role in binding dynein to membranous organelles or chromosomes. The polypeptide is Cytoplasmic dynein 1 light intermediate chain 2 (Homo sapiens (Human)).